We begin with the raw amino-acid sequence, 224 residues long: Pleckstrin homology domain-containing family B member 2 (224 aa).

The PH domain maps to 2-109; the sequence is AFVKSGWLLR…WKIALQDART (108 aa). Lys20 is an a 1,2-diacyl-sn-glycero-3-phospho-L-serine binding site.

The protein localises to the recycling endosome membrane. Involved in retrograde transport of recycling endosomes. The polypeptide is Pleckstrin homology domain-containing family B member 2 (PLEKHB2) (Gallus gallus (Chicken)).